A 548-amino-acid polypeptide reads, in one-letter code: Aromatic ammonia-lyase (548 aa).

Tyr55 functions as the Proton donor/acceptor in the catalytic mechanism. Positions 144–146 form a cross-link, 5-imidazolinone (Ala-Gly); sequence ASG. Ser145 is modified (2,3-didehydroalanine (Ser)). 7 residues coordinate (E)-cinnamate: Asn200, Gln288, Arg294, Asn324, Lys396, Glu425, and Asn428.

The protein belongs to the PAL/histidase family. In terms of assembly, homotetramer. In terms of processing, contains an active site 4-methylidene-imidazol-5-one (MIO), which is formed autocatalytically by cyclization and dehydration of residues Ala-Ser-Gly.

It catalyses the reaction L-phenylalanine = (E)-cinnamate + NH4(+). The enzyme catalyses L-tyrosine = (E)-4-coumarate + NH4(+). It carries out the reaction 3,4-dimethoxy-L-phenylalanine = 3,4-dimethoxy-(E)-cinnamate + NH4(+). The protein operates within phenylpropanoid metabolism; trans-cinnamate biosynthesis; trans-cinnamate from L-phenylalanine: step 1/1. In terms of biological role, aromatic ammonia-lyase (AAL) that shows reduced activity to catalyze the non-oxidative ammonia elimination from the canonical AAL substrates L-Phe and L-Tyr, contrasted by its pronounced efficiency towards substrates with electron-donor aromatic substituents such as 3,4-dimethoxy-L-phenylalanine. Is also able to catalyze the reverse reaction in vitro, i.e. the ammonia addition reaction to cinnamate derivatives, producing enantiopure phenylalanine derivatives. Shows no activity with L-His. This chain is Aromatic ammonia-lyase, found in Loktanella atrilutea.